We begin with the raw amino-acid sequence, 396 residues long: Phosphoglycerate kinase (396 aa).

Residues 21 to 23, Arg-36, 59 to 62, Arg-118, and Arg-151 each bind substrate; these read DFN and HLGR. ATP is bound by residues Lys-201, Gly-292, Glu-323, and 349–352; that span reads GGDS.

It belongs to the phosphoglycerate kinase family. Monomer.

It localises to the cytoplasm. The enzyme catalyses (2R)-3-phosphoglycerate + ATP = (2R)-3-phospho-glyceroyl phosphate + ADP. Its pathway is carbohydrate degradation; glycolysis; pyruvate from D-glyceraldehyde 3-phosphate: step 2/5. In Leptospira biflexa serovar Patoc (strain Patoc 1 / Ames), this protein is Phosphoglycerate kinase.